A 291-amino-acid chain; its full sequence is ATP synthase gamma chain (291 aa).

Belongs to the ATPase gamma chain family. In terms of assembly, F-type ATPases have 2 components, CF(1) - the catalytic core - and CF(0) - the membrane proton channel. CF(1) has five subunits: alpha(3), beta(3), gamma(1), delta(1), epsilon(1). CF(0) has three main subunits: a, b and c.

Its subcellular location is the cell inner membrane. In terms of biological role, produces ATP from ADP in the presence of a proton gradient across the membrane. The gamma chain is believed to be important in regulating ATPase activity and the flow of protons through the CF(0) complex. This Neisseria meningitidis serogroup C (strain 053442) protein is ATP synthase gamma chain.